We begin with the raw amino-acid sequence, 563 residues long: Protein disulfide isomerase-like 1-4 (563 aa).

A signal peptide spans 1 to 22; the sequence is MRSRSLLLVALATLLLHASASA. Residues 40 to 64 form a disordered region; it reads NDPDGWLQEGSPDDDDDDDLFHHGQ. A Thioredoxin 1 domain is found at 46–180; it reads LQEGSPDDDD…IVSWVNKKLA (135 aa). Residue N82 is glycosylated (N-linked (GlcNAc...) asparagine). Catalysis depends on nucleophile residues C102 and C105. C102 and C105 are disulfide-bonded. 2 N-linked (GlcNAc...) asparagine glycosylation sites follow: N185 and N315. Residues 394-523 enclose the Thioredoxin 2 domain; sequence FLEEKLTPFY…MYKFIKKHAS (130 aa). Catalysis depends on nucleophile residues C444 and C447. A disulfide bridge links C444 with C447. The span at 529–542 shows a compositional bias: basic and acidic residues; sequence KRPDSSATKTEKDQ. Residues 529 to 563 are disordered; the sequence is KRPDSSATKTEKDQSTASTNLRGERSSGTNFKDEL. The span at 543–563 shows a compositional bias: polar residues; the sequence is STASTNLRGERSSGTNFKDEL. Residues 560–563 carry the Prevents secretion from ER motif; sequence KDEL.

This sequence belongs to the protein disulfide isomerase family.

It is found in the endoplasmic reticulum lumen. It carries out the reaction Catalyzes the rearrangement of -S-S- bonds in proteins.. Acts as a protein-folding catalyst that interacts with nascent polypeptides to catalyze the formation, isomerization, and reduction or oxidation of disulfide bonds. May play a role in storage protein biogenesis. This chain is Protein disulfide isomerase-like 1-4 (PDIL1-4), found in Oryza sativa subsp. japonica (Rice).